A 612-amino-acid chain; its full sequence is Phragmoplastin DRP1D (612 aa).

Met1 carries the N-acetylmethionine modification. Residues Trp32–Pro301 form the Dynamin-type G domain. A G1 motif region spans residues Gly42 to Ser49. Ser45–Ser50 is a GTP binding site. Positions Val68–Arg70 are G2 motif. The G3 motif stretch occupies residues Asp143–Gly146. Residues Thr212 to Asp215 form a G4 motif region. GTP-binding positions include Lys213 to Asp218 and Asn243 to Gln246. The G5 motif stretch occupies residues Val242 to Ser245. Residues Phe520–Arg612 form the GED domain.

It belongs to the TRAFAC class dynamin-like GTPase superfamily. Dynamin/Fzo/YdjA family. In terms of assembly, forms homodimer and may homooligomerize and heterooligomerize to form the phragmoplastin complex. Binds to PHIP1.

Its subcellular location is the cytoplasm. It is found in the cytoskeleton. The enzyme catalyses GTP + H2O = GDP + phosphate + H(+). In terms of biological role, putative microtubule-associated force-producing protein. Has a GTPase activity. This chain is Phragmoplastin DRP1D, found in Arabidopsis thaliana (Mouse-ear cress).